The chain runs to 205 residues: Holliday junction branch migration complex subunit RuvA (205 aa).

The interval 1-64 (MIGRLSGILV…EDAQLLYGFI (64 aa)) is domain I. The segment at 65-143 (TKQERALFRL…SLLEASAGSE (79 aa)) is domain II. The interval 144–156 (REFMLQSNYTPAA) is flexible linker. The interval 157–205 (AVDSAEEDAISALLSLGYKPAQASKSVSAAFKEGMSSETLIKAALKSML) is domain III.

Belongs to the RuvA family. In terms of assembly, homotetramer. Forms an RuvA(8)-RuvB(12)-Holliday junction (HJ) complex. HJ DNA is sandwiched between 2 RuvA tetramers; dsDNA enters through RuvA and exits via RuvB. An RuvB hexamer assembles on each DNA strand where it exits the tetramer. Each RuvB hexamer is contacted by two RuvA subunits (via domain III) on 2 adjacent RuvB subunits; this complex drives branch migration. In the full resolvosome a probable DNA-RuvA(4)-RuvB(12)-RuvC(2) complex forms which resolves the HJ.

The protein resides in the cytoplasm. Its function is as follows. The RuvA-RuvB-RuvC complex processes Holliday junction (HJ) DNA during genetic recombination and DNA repair, while the RuvA-RuvB complex plays an important role in the rescue of blocked DNA replication forks via replication fork reversal (RFR). RuvA specifically binds to HJ cruciform DNA, conferring on it an open structure. The RuvB hexamer acts as an ATP-dependent pump, pulling dsDNA into and through the RuvAB complex. HJ branch migration allows RuvC to scan DNA until it finds its consensus sequence, where it cleaves and resolves the cruciform DNA. This chain is Holliday junction branch migration complex subunit RuvA, found in Shewanella frigidimarina (strain NCIMB 400).